The following is a 304-amino-acid chain: MSASNSWFHLKVPASSANLGPGFDALGLALGVYLTCRFRHSATLSITAAGRDACGIPASPDNLIWQTALTVARNQRMTMPPIELEIHNEIPLGKGMGSSAAALTAGVVIADELLDLGWKPLRILDEAARLEGHPDNVAPCTLGSIVASAIDSGGVTRAVRLPLPKSFDLAIVVPDFDLPTAKARAVLPSGYSREDAVFNVQRAALLIAALATGTTNVFPAAIEDRFHQPYREALVPGLHEILRLRAPGLLGCALSGAGPSILVFFERGYESVCELVEQIFRLNGHASETLHCSIPERGFELTRA.

Residue 91–101 (PLGKGMGSSAA) coordinates ATP.

The protein belongs to the GHMP kinase family. Homoserine kinase subfamily.

It localises to the cytoplasm. The enzyme catalyses L-homoserine + ATP = O-phospho-L-homoserine + ADP + H(+). Its pathway is amino-acid biosynthesis; L-threonine biosynthesis; L-threonine from L-aspartate: step 4/5. Its function is as follows. Catalyzes the ATP-dependent phosphorylation of L-homoserine to L-homoserine phosphate. This Solibacter usitatus (strain Ellin6076) protein is Homoserine kinase.